The following is a 353-amino-acid chain: Rhodopsin (353 aa).

The Extracellular segment spans residues 1-36 (MNGTEGPYFYVPMVNTSGIVRSPYEYPQYYLVNPAA). Asn-2 and Asn-15 each carry an N-linked (GlcNAc...) asparagine glycan. The helical transmembrane segment at 37-61 (YAALGAYMFLLILVGFPINFLTLYV) threads the bilayer. Over 62–73 (TIEHKKLRTPLN) the chain is Cytoplasmic. The helical transmembrane segment at 74-96 (YILLNLAVADLFMVFGGFTTTMY) threads the bilayer. The Extracellular segment spans residues 97–110 (TSMHGYFVLGRLGC). Cys-110 and Cys-187 are oxidised to a cystine. Residues 111 to 133 (NIEGFFATLGGEIALWSLVVLAI) form a helical membrane-spanning segment. The 'Ionic lock' involved in activated form stabilization motif lies at 134–136 (ERW). Topologically, residues 134-152 (ERWVVVCKPISNFRFGENH) are cytoplasmic. Residues 153–173 (AIMGLAFTWLMAMACAAPPLV) traverse the membrane as a helical segment. Residues 174–202 (GWSRYIPEGMQCSCGIDYYTRAEGFNNES) lie on the Extracellular side of the membrane. An N-linked (GlcNAc...) asparagine glycan is attached at Asn-200. The chain crosses the membrane as a helical span at residues 203 to 224 (FVIYMFVCHFLIPLMVVFFCYG). Topologically, residues 225-252 (RLLCAVKEAAAAQQESETTQRAEREVTR) are cytoplasmic. Residues 253–274 (MVVIMVIAFLICWCPYAGVAWW) traverse the membrane as a helical segment. Over 275-286 (IFTHQGSDFGPV) the chain is Extracellular. A helical transmembrane segment spans residues 287–308 (FMTIPAFFAKSSSIYNPMIYIC). Lys-296 carries the N6-(retinylidene)lysine modification. The Cytoplasmic segment spans residues 309 to 353 (LNKQFRHCMITTLCCGKNPFEEEEGASTASKTEASSVSSSSVSPA). S-palmitoyl cysteine attachment occurs at residues Cys-322 and Cys-323. The segment at 331 to 353 (EEGASTASKTEASSVSSSSVSPA) is disordered. The span at 334–353 (ASTASKTEASSVSSSSVSPA) shows a compositional bias: low complexity.

The protein belongs to the G-protein coupled receptor 1 family. Opsin subfamily. Post-translationally, phosphorylated on some or all of the serine and threonine residues present in the C-terminal region. In terms of processing, contains one covalently linked retinal chromophore.

The protein localises to the membrane. It localises to the cell projection. The protein resides in the cilium. It is found in the photoreceptor outer segment. Functionally, photoreceptor required for image-forming vision at low light intensity. While most salt water fish species use retinal as chromophore, most freshwater fish use 3-dehydroretinal, or a mixture of retinal and 3-dehydroretinal. Light-induced isomerization of 11-cis to all-trans retinal triggers a conformational change that activates signaling via G-proteins. Subsequent receptor phosphorylation mediates displacement of the bound G-protein alpha subunit by arrestin and terminates signaling. This Lithognathus mormyrus (Striped seabream) protein is Rhodopsin (rho).